Here is a 115-residue protein sequence, read N- to C-terminus: ComG operon protein 5 (115 aa).

A propeptide spans 1 to 7 (MWRENKG) (leader sequence). The residue at position 8 (F8) is an N-methylphenylalanine. The chain crosses the membrane as a helical span at residues 13–31 (TMSALSLWLFVLLTVVPLW).

Processing of ComGE in competent cells requires ComC.

The protein resides in the cell membrane. Its subcellular location is the cell surface. Functionally, required for transformation and DNA binding. The chain is ComG operon protein 5 (comGE) from Bacillus subtilis (strain 168).